The following is a 226-amino-acid chain: ATP synthase F(0) complex subunit a (226 aa).

6 helical membrane-spanning segments follow: residues 14-34, 68-88, 97-117, 138-158, 164-184, and 193-213; these read ILGISILPLIMIFPCLLFSAP, WTLMLITLIMFIASTNLLGLL, QLSMNMGMAVPLWLGTVLMGF, IPMLIIIETISLFIQPVALAV, ITAGHLLIHLIGSATLALSSI, and FTILFLLTILEIAVALIQAYV.

The protein belongs to the ATPase A chain family. Component of the ATP synthase complex composed at least of ATP5F1A/subunit alpha, ATP5F1B/subunit beta, ATP5MC1/subunit c (homooctomer), MT-ATP6/subunit a, MT-ATP8/subunit 8, ATP5ME/subunit e, ATP5MF/subunit f, ATP5MG/subunit g, ATP5MK/subunit k, ATP5MJ/subunit j, ATP5F1C/subunit gamma, ATP5F1D/subunit delta, ATP5F1E/subunit epsilon, ATP5PF/subunit F6, ATP5PB/subunit b, ATP5PD/subunit d, ATP5PO/subunit OSCP. ATP synthase complex consists of a soluble F(1) head domain (subunits alpha(3) and beta(3)) - the catalytic core - and a membrane F(0) domain - the membrane proton channel (subunits c, a, 8, e, f, g, k and j). These two domains are linked by a central stalk (subunits gamma, delta, and epsilon) rotating inside the F1 region and a stationary peripheral stalk (subunits F6, b, d, and OSCP). Interacts with DNAJC30; interaction is direct.

The protein resides in the mitochondrion inner membrane. The enzyme catalyses H(+)(in) = H(+)(out). Subunit a, of the mitochondrial membrane ATP synthase complex (F(1)F(0) ATP synthase or Complex V) that produces ATP from ADP in the presence of a proton gradient across the membrane which is generated by electron transport complexes of the respiratory chain. ATP synthase complex consist of a soluble F(1) head domain - the catalytic core - and a membrane F(1) domain - the membrane proton channel. These two domains are linked by a central stalk rotating inside the F(1) region and a stationary peripheral stalk. During catalysis, ATP synthesis in the catalytic domain of F(1) is coupled via a rotary mechanism of the central stalk subunits to proton translocation. With the subunit c (ATP5MC1), forms the proton-conducting channel in the F(0) domain, that contains two crucial half-channels (inlet and outlet) that facilitate proton movement from the mitochondrial intermembrane space (IMS) into the matrix. Protons are taken up via the inlet half-channel and released through the outlet half-channel, following a Grotthuss mechanism. In Tachyglossus aculeatus aculeatus (Southeast Australian short-beaked echidna), this protein is ATP synthase F(0) complex subunit a.